A 268-amino-acid chain; its full sequence is Riboflavin transport system permease protein RibX (268 aa).

6 helical membrane passes run 24-44 (ALGL…GVTL), 76-96 (LATL…ALIL), 119-139 (AIPV…GLTS), 140-160 (KVLV…VVAI), 185-205 (VEAP…LALA), and 236-256 (LIFV…VLAG). One can recognise an ABC transmembrane type-1 domain in the interval 75–255 (TLATLSAALG…LITLTLYVLA (181 aa)).

It belongs to the binding-protein-dependent transport system permease family. The complex is likely composed of an ATP-binding protein, a transmembrane protein (RibX) and a solute-binding protein (RibY).

Its subcellular location is the cell membrane. Its function is as follows. Part of an ABC transporter complex that transports riboflavin into the cell. The protein is Riboflavin transport system permease protein RibX of Chloroflexus aurantiacus (strain ATCC 29366 / DSM 635 / J-10-fl).